Consider the following 387-residue polypeptide: Carboxyaminopropylagmatine decarboxylase (387 aa).

The residue at position 52 (Lys-52) is an N6-(pyridoxal phosphate)lysine.

Belongs to the Orn/Lys/Arg decarboxylase class-II family. The cofactor is pyridoxal 5'-phosphate.

It catalyses the reaction N(1)-[(S)-3-amino-3-carboxypropyl]agmatine + H(+) = N(1)-(3-aminopropyl)agmatine + CO2. It functions in the pathway amine and polyamine biosynthesis; spermidine biosynthesis. In terms of biological role, decarboxylase involved in the biosynthesis of spermidine via the carboxyaminopropylagmatine (CAPA) pathway. Catalyzes the decarboxylation of CAPA to form aminopropylagmatine (APA). Can also decarboxylate carboxyspermidine and carboxynorspermidine, but not ornithine, arginine, lysine and meso-diaminopimelate. The chain is Carboxyaminopropylagmatine decarboxylase from Synechocystis sp. (strain ATCC 27184 / PCC 6803 / Kazusa).